A 259-amino-acid chain; its full sequence is Dihydroorotate dehydrogenase B (NAD(+)), electron transfer subunit (259 aa).

Residues 2-102 (MQKQNMIVVN…LGPLGHGFPV (101 aa)) enclose the FAD-binding FR-type domain. Residues 53-56 (RPIS), 70-72 (LYR), and 77-78 (GT) contribute to the FAD site. [2Fe-2S] cluster contacts are provided by C221, C226, C229, and C246.

Belongs to the PyrK family. As to quaternary structure, heterotetramer of 2 PyrK and 2 PyrD type B subunits. It depends on [2Fe-2S] cluster as a cofactor. The cofactor is FAD.

It participates in pyrimidine metabolism; UMP biosynthesis via de novo pathway; orotate from (S)-dihydroorotate (NAD(+) route): step 1/1. Responsible for channeling the electrons from the oxidation of dihydroorotate from the FMN redox center in the PyrD type B subunit to the ultimate electron acceptor NAD(+). This Bacillus cereus (strain Q1) protein is Dihydroorotate dehydrogenase B (NAD(+)), electron transfer subunit.